Here is an 854-residue protein sequence, read N- to C-terminus: Selenocysteine insertion sequence-binding protein 2 (854 aa).

Disordered stretches follow at residues 332–351 (ADPKNVSIPSSEALSSDPSY), 356–394 (HIIHPTQKSKASQGSDLEQNEASRKNKKKKEKSTSKYEV), 417–445 (ERRDRIETPKFQSKQQPQDNFKNNVKKSQ), and 488–619 (ECAS…PNHT). 2 stretches are compositionally biased toward polar residues: residues 338–350 (SIPSSEALSSDPS) and 361–372 (TQKSKASQGSDL). Positions 380 to 387 (KNKKKKEK) match the Nuclear localization signal motif. A compositionally biased stretch (polar residues) spans 426–445 (KFQSKQQPQDNFKNNVKKSQ). Basic and acidic residues predominate over residues 536–547 (ILKERQERKQRL). Residues 548-559 (QENAVSPAFTSD) show a composition bias toward polar residues. A compositionally biased stretch (acidic residues) spans 560 to 572 (DTQDGESGGDDQF). Over residues 593 to 611 (VEDKSEEPPGTELQRDTEA) the composition is skewed to basic and acidic residues. An RNA-binding region spans residues 673-694 (LVLGLREVLKHLKLKKLKCVII). The interval 787–812 (EPRPQAPPSLPTQGPSCPAEDGPPAL) is disordered.

As to expression, expressed at high levels in testis.

Its subcellular location is the nucleus. It localises to the mitochondrion. Its function is as follows. mRNA-binding protein that binds to the SECIS (selenocysteine insertion sequence) element present in the 3'-UTR of mRNAs encoding selenoproteins and facilitates the incorporation of the rare amino acid selenocysteine. Insertion of selenocysteine at UGA codons is mediated by SECISBP2 and EEFSEC: SECISBP2 (1) specifically binds the SECIS sequence once the 80S ribosome encounters an in-frame UGA codon and (2) contacts the RPS27A/eS31 of the 40S ribosome before ribosome stalling. (3) GTP-bound EEFSEC then delivers selenocysteinyl-tRNA(Sec) to the 80S ribosome and adopts a preaccommodated state conformation. (4) After GTP hydrolysis, EEFSEC dissociates from the assembly, selenocysteinyl-tRNA(Sec) accommodates, and peptide bond synthesis and selenoprotein elongation occur. In Homo sapiens (Human), this protein is Selenocysteine insertion sequence-binding protein 2.